A 215-amino-acid polypeptide reads, in one-letter code: Pyridoxine/pyridoxamine 5'-phosphate oxidase (215 aa).

Substrate contacts are provided by residues 11–14 (RRDY) and K69. Residues 64-69 (RVVLLK), 79-80 (YT), K86, and Q108 each bind FMN. 3 residues coordinate substrate: Y126, R130, and S134. Residues 143–144 (QS) and W188 each bind FMN. 194 to 196 (RLH) lines the substrate pocket. R198 contacts FMN.

It belongs to the pyridoxamine 5'-phosphate oxidase family. As to quaternary structure, homodimer. Requires FMN as cofactor.

It carries out the reaction pyridoxamine 5'-phosphate + O2 + H2O = pyridoxal 5'-phosphate + H2O2 + NH4(+). The enzyme catalyses pyridoxine 5'-phosphate + O2 = pyridoxal 5'-phosphate + H2O2. Its pathway is cofactor metabolism; pyridoxal 5'-phosphate salvage; pyridoxal 5'-phosphate from pyridoxamine 5'-phosphate: step 1/1. It functions in the pathway cofactor metabolism; pyridoxal 5'-phosphate salvage; pyridoxal 5'-phosphate from pyridoxine 5'-phosphate: step 1/1. In terms of biological role, catalyzes the oxidation of either pyridoxine 5'-phosphate (PNP) or pyridoxamine 5'-phosphate (PMP) into pyridoxal 5'-phosphate (PLP). This Legionella pneumophila (strain Lens) protein is Pyridoxine/pyridoxamine 5'-phosphate oxidase.